Consider the following 286-residue polypeptide: 2-hydroxy-6-oxo-6-phenylhexa-2,4-dienoate hydrolase (286 aa).

Substrate-binding positions include 42–43 (GG), Asn-51, Asn-111, Ser-180, and Arg-190. His-265 (proton acceptor) is an active-site residue. Trp-266 is a substrate binding site.

It belongs to the AB hydrolase superfamily. BphD family. As to quaternary structure, homodimer.

The catalysed reaction is 2,6-dioxo-6-phenylhexa-3-enoate + H2O = 2-oxopent-4-enoate + benzoate + H(+). Its pathway is xenobiotic degradation; biphenyl degradation; 2-hydroxy-2,4-pentadienoate and benzoate from biphenyl: step 4/4. With respect to regulation, inhibited by 3-Cl HOPDA. Catalyzes an unusual C-C bond hydrolysis of 2-hydroxy-6-oxo-6-phenylhexa-2,4-dienoic acid (HOPDA) to produce benzoic acid and 2-hydroxy-2,4-pentadienoic acid (HPD). In Paraburkholderia xenovorans (strain LB400), this protein is 2-hydroxy-6-oxo-6-phenylhexa-2,4-dienoate hydrolase (bphD).